The primary structure comprises 446 residues: ATP synthase subunit b-delta (446 aa).

The interval 1–168 (MSTFIGQLFG…PATADVDYPL (168 aa)) is ATP synthase subunit b. The chain crosses the membrane as a helical span at residues 4–24 (FIGQLFGFAVIVYLVWRFIVP). An ATP synthase subunit delta region spans residues 169 to 446 (LAKMRSASRR…LAAAEARLPD (278 aa)).

In the N-terminal section; belongs to the ATPase B chain family. The protein in the C-terminal section; belongs to the ATPase delta chain family. As to quaternary structure, F-type ATPases have 2 components, F(1) - the catalytic core - and F(0) - the membrane proton channel. F(1) has five subunits: alpha(3), beta(3), gamma(1), delta(1), epsilon(1). F(0) has three main subunits: a(1), b(2) and c(10-14). The alpha and beta chains form an alternating ring which encloses part of the gamma chain. F(1) is attached to F(0) by a central stalk formed by the gamma and epsilon chains, while a peripheral stalk is formed by the delta and b chains.

The protein localises to the cell membrane. Its function is as follows. F(1)F(0) ATP synthase produces ATP from ADP in the presence of a proton or sodium gradient. F-type ATPases consist of two structural domains, F(1) containing the extramembraneous catalytic core and F(0) containing the membrane proton channel, linked together by a central stalk and a peripheral stalk. During catalysis, ATP synthesis in the catalytic domain of F(1) is coupled via a rotary mechanism of the central stalk subunits to proton translocation. Functionally, this fusion protein includes a component of the F(0) channel (subunit b) and of the F(1) subunit (subunit delta). Two copies of subunit b and one of delta together form the peripheral 'stator' stalk which links F(1) to F(0). The polypeptide is ATP synthase subunit b-delta (atpFH) (Mycobacterium bovis (strain ATCC BAA-935 / AF2122/97)).